Consider the following 957-residue polypeptide: Kinesin heavy chain isoform 5C (957 aa).

The 320-residue stretch at 8–327 folds into the Kinesin motor domain; sequence SIKVMCRFRP…LMFGQRAKTI (320 aa). Residues Gln87, Ser89, Ser90, Gly91, Lys92, Thr93, His94, and Lys99 each contribute to the ATP site. A microtubule-binding region spans residues 174 to 315; it reads VSSPEEVMDV…PSVFNEAETK (142 aa). Residues 406-923 are a coiled coil; the sequence is VAGISTEEKE…ARRAHSAQIA (518 aa). The segment at 859–956 is globular; that stretch reads RCELPKLEKR…GSSSNSTHYQ (98 aa). The segment at 911–957 is disordered; the sequence is KNMARRAHSAQIAKPIRPGHYPASSPTAVHAIRGGGGSSSNSTHYQK.

This sequence belongs to the TRAFAC class myosin-kinesin ATPase superfamily. Kinesin family. Kinesin subfamily. Oligomer composed of two heavy chains and two light chains. Interacts with GRIP1 and KLC3. Interacts with TRAK1. Interacts with ZFYVE27. As to expression, highest expression in brain, prostate and testis, and moderate expression in kidney, small intestine and ovary.

It is found in the cytoplasm. It localises to the cytoskeleton. The protein resides in the cell projection. The protein localises to the dendrite. It catalyses the reaction ATP + H2O = ADP + phosphate + H(+). Its function is as follows. Microtubule-associated force-producing protein that may play a role in organelle transport. Has ATPase activity. Involved in synaptic transmission. Mediates dendritic trafficking of mRNAs. Required for anterograde axonal transportation of MAPK8IP3/JIP3 which is essential for MAPK8IP3/JIP3 function in axon elongation. This Homo sapiens (Human) protein is Kinesin heavy chain isoform 5C (KIF5C).